We begin with the raw amino-acid sequence, 234 residues long: Glucosamine-6-phosphate deaminase (234 aa).

Aspartate 63 functions as the Proton acceptor; for enolization step in the catalytic mechanism. The For ring-opening step role is filled by asparagine 129. Histidine 131 serves as the catalytic Proton acceptor; for ring-opening step. The For ring-opening step role is filled by glutamate 136.

This sequence belongs to the glucosamine/galactosamine-6-phosphate isomerase family. NagB subfamily.

The catalysed reaction is alpha-D-glucosamine 6-phosphate + H2O = beta-D-fructose 6-phosphate + NH4(+). The protein operates within amino-sugar metabolism; N-acetylneuraminate degradation; D-fructose 6-phosphate from N-acetylneuraminate: step 5/5. In terms of biological role, catalyzes the reversible isomerization-deamination of glucosamine 6-phosphate (GlcN6P) to form fructose 6-phosphate (Fru6P) and ammonium ion. The protein is Glucosamine-6-phosphate deaminase of Listeria monocytogenes serotype 4a (strain HCC23).